The chain runs to 841 residues: Transcription regulator protein BACH2 (841 aa).

The BTB domain occupies 37-103 (CDVTLIVERK…AYTAKLLLSR (67 aa)). Disordered stretches follow at residues 153 to 173 (HEDC…TMDS), 204 to 226 (EALL…DALT), and 246 to 329 (SSHS…AACL). A compositionally biased stretch (acidic residues) spans 160–172 (AGEEEDEEEETMD). 2 stretches are compositionally biased toward basic and acidic residues: residues 214–224 (TDTKESSEKDA) and 298–313 (PDAK…DRKQ). Position 315 is a phosphoserine (Ser315). Residues Lys382 and Lys421 each participate in a glycyl lysine isopeptide (Lys-Gly) (interchain with G-Cter in SUMO2) cross-link. Ser521 carries the post-translational modification Phosphoserine; by RPS6KB1. Residues 583-610 (QSYGTNSSDESGSFSEADSESCPVQDRG) form a disordered region. The span at 584–598 (SYGTNSSDESGSFSE) shows a compositional bias: polar residues. Positions 646 to 709 (FIHDVRRRSK…GELLDNFSCL (64 aa)) constitute a bZIP domain. The interval 651 to 667 (RRRSKNRIAAQRCRKRK) is basic motif. Residues 671–678 (IQNLECEI) are leucine-zipper. The tract at residues 777 to 816 (PGPPWAPSNTSENCTSGRRLEGTDPGTFSERGPPLEPRSQ) is disordered. The Nuclear export signal motif lies at 821-841 (DFCQEMTDKCTTDEQPRKDYT).

The protein belongs to the bZIP family. CNC subfamily. Homodimer; disulfide-linked. Heterodimer of BACH2 and Maf-related transcription factors. Post-translationally, phosphorylation at Ser-521 downstream of the PI-3K pathway promotes nuclear export. In terms of processing, the reversible disulfide bond may provide a mechanism to regulate the activity in oxidative stress responses. B-cell specific.

Its subcellular location is the cytoplasm. The protein resides in the nucleus. Transcriptional regulator that acts as a repressor or activator. Binds to Maf recognition elements (MARE). Plays an important role in coordinating transcription activation and repression by MAFK. Induces apoptosis in response to oxidative stress through repression of the antiapoptotic factor HMOX1. Positively regulates the nuclear import of actin. Is a key regulator of adaptive immunity, crucial for the maintenance of regulatory T-cell function and B-cell maturation. The sequence is that of Transcription regulator protein BACH2 (BACH2) from Homo sapiens (Human).